The primary structure comprises 64 residues: Large ribosomal subunit protein bL33 (64 aa).

Basic and acidic residues predominate over residues 16–25 (EARTSSEPRR). The tract at residues 16 to 41 (EARTSSEPRRSNGVSRYTTEKNKRNT) is disordered.

It belongs to the bacterial ribosomal protein bL33 family.

This is Large ribosomal subunit protein bL33 from Prochlorococcus marinus subsp. pastoris (strain CCMP1986 / NIES-2087 / MED4).